The following is a 377-amino-acid chain: Lactosylceramide 1,3-N-acetyl-beta-D-glucosaminyltransferase B (377 aa).

The Cytoplasmic portion of the chain corresponds to 1-13 (MLISARRLRRCQS). A helical; Signal-anchor for type II membrane protein membrane pass occupies residues 14-30 (LQLLASCFVLSLMALLV). Over 31-377 (QEDNSLVNHV…DTYPCSAAWS (347 aa)) the chain is Lumenal. Asn56, Asn167, and Asn275 each carry an N-linked (GlcNAc...) asparagine glycan.

The protein belongs to the glycosyltransferase 31 family.

The protein localises to the golgi apparatus membrane. The enzyme catalyses a beta-D-Gal-(1-&gt;4)-beta-D-Glc-(1&lt;-&gt;1)-Cer(d18:1(4E)) + UDP-N-acetyl-alpha-D-glucosamine = a beta-D-GlcNAc-(1-&gt;3)-beta-D-Gal-(1-&gt;4)-beta-D-Glc-(1&lt;-&gt;1)-Cer(d18:1(4E)) + UDP + H(+). It catalyses the reaction a neolactoside nLc4Cer(d18:1(4E)) + UDP-N-acetyl-alpha-D-glucosamine = a neolactoside IV(3)-beta-GlcNAc-nLc4Cer(d18:1(4E)) + UDP + H(+). It participates in protein modification; protein glycosylation. Beta-1,3-N-acetylglucosaminyltransferase that plays a key role in the synthesis of lacto- or neolacto-series carbohydrate chains on glycolipids. This Xenopus laevis (African clawed frog) protein is Lactosylceramide 1,3-N-acetyl-beta-D-glucosaminyltransferase B (b3gnt5-b).